Reading from the N-terminus, the 450-residue chain is MLDINLFQVEKGGNPEIIRESQRKRGADVGVVDKVIEMYKEWVSLRFELDNTNKSINRVQKEIGLKMKAKEDASELLEEKNSLTERKKNLIEQETAKNKEMLNVVSSIGNIVHDSVPVSMDEDNNEIIRKWAPEGVTVEKKNCLSHHEVLTRLDGYDPERGVKVSGHRGYFLRQYGVFFNLALIQYGLDFLEKRGYIALQAPTMLNKDVMAKTAQLEQFDEELYKVIDGDEERYLIATSEQPISAYHSGEWFEKPSEQLPLKYAGYSTCYRREAGSHGRDAWGIFRVHAFEKIEQFVLTDPEKSWEAFTEMINHAEDFYKSLELPYRIVAIVSGALNNAAAKKYDLEAWFPFQGEYKELVSCSNCTDYQSRNLEIRCGVKKMGDREKKYVHCLNSTLCATERALCCILENYQTPDGVNVPKVLQPYMGGKTFLPFTKELPKNSTSKKGKN.

Residue 238-240 (TSE) participates in L-serine binding. Residues 271–273 (RRE) and Val-287 contribute to the ATP site. Residue Glu-294 participates in L-serine binding. 358–361 (ELVS) serves as a coordination point for ATP. Position 396 (Thr-396) interacts with L-serine.

The protein belongs to the class-II aminoacyl-tRNA synthetase family. Type-1 seryl-tRNA synthetase subfamily. Homodimer. The tRNA molecule binds across the dimer.

It is found in the cytoplasm. The protein localises to the cytosol. The catalysed reaction is tRNA(Ser) + L-serine + ATP = L-seryl-tRNA(Ser) + AMP + diphosphate + H(+). Its function is as follows. Catalyzes the attachment of serine to tRNA(Ser) in a two-step reaction: serine is first activated by ATP to form Ser-AMP and then transferred to the acceptor end of tRNA(Ser). The polypeptide is Serine--tRNA ligase, cytoplasmic (Schizosaccharomyces pombe (strain 972 / ATCC 24843) (Fission yeast)).